The following is a 448-amino-acid chain: uncharacterized protein (448 aa).

K280 is modified (N6-(pyridoxal phosphate)lysine).

It belongs to the class-III pyridoxal-phosphate-dependent aminotransferase family.

It localises to the cytoplasm. The protein resides in the mitochondrion. This is an uncharacterized protein from Schizosaccharomyces pombe (strain 972 / ATCC 24843) (Fission yeast).